The chain runs to 147 residues: Nucleoside diphosphate kinase (147 aa).

ATP-binding residues include lysine 9, phenylalanine 57, arginine 85, threonine 91, arginine 102, and asparagine 112. The active-site Pros-phosphohistidine intermediate is the histidine 115.

It belongs to the NDK family. Homotetramer. The cofactor is Mg(2+).

Its subcellular location is the cytoplasm. The catalysed reaction is a 2'-deoxyribonucleoside 5'-diphosphate + ATP = a 2'-deoxyribonucleoside 5'-triphosphate + ADP. The enzyme catalyses a ribonucleoside 5'-diphosphate + ATP = a ribonucleoside 5'-triphosphate + ADP. Its function is as follows. Major role in the synthesis of nucleoside triphosphates other than ATP. The ATP gamma phosphate is transferred to the NDP beta phosphate via a ping-pong mechanism, using a phosphorylated active-site intermediate. The polypeptide is Nucleoside diphosphate kinase (Kosmotoga olearia (strain ATCC BAA-1733 / DSM 21960 / TBF 19.5.1)).